A 386-amino-acid chain; its full sequence is Succinyl-diaminopimelate desuccinylase (386 aa).

Histidine 73 is a Zn(2+) binding site. The active site involves aspartate 75. A Zn(2+)-binding site is contributed by aspartate 106. Glutamate 140 serves as the catalytic Proton acceptor. Zn(2+)-binding residues include glutamate 141, glutamate 169, and histidine 355.

It belongs to the peptidase M20A family. DapE subfamily. Homodimer. Zn(2+) serves as cofactor. Requires Co(2+) as cofactor.

It carries out the reaction N-succinyl-(2S,6S)-2,6-diaminopimelate + H2O = (2S,6S)-2,6-diaminopimelate + succinate. Its pathway is amino-acid biosynthesis; L-lysine biosynthesis via DAP pathway; LL-2,6-diaminopimelate from (S)-tetrahydrodipicolinate (succinylase route): step 3/3. In terms of biological role, catalyzes the hydrolysis of N-succinyl-L,L-diaminopimelic acid (SDAP), forming succinate and LL-2,6-diaminopimelate (DAP), an intermediate involved in the bacterial biosynthesis of lysine and meso-diaminopimelic acid, an essential component of bacterial cell walls. The sequence is that of Succinyl-diaminopimelate desuccinylase from Delftia acidovorans (strain DSM 14801 / SPH-1).